We begin with the raw amino-acid sequence, 430 residues long: Glial fibrillary acidic protein (430 aa).

Residues 1–31 (MERRRITSARRSYASSETMVRGHGPTRHLGT) form a disordered region. The segment at 1 to 70 (MERRRITSAR…KETRASERAE (70 aa)) is head. Thr7 bears the Phosphothreonine; by AURKB and ROCK1 mark. Residues 9–18 (ARRSYASSET) are compositionally biased toward polar residues. Arg11 bears the Omega-N-methylarginine mark. Ser12 bears the Phosphoserine mark. Arg21 bears the Omega-N-methylarginine mark. Arg34 is subject to Citrulline. Phosphoserine; by AURKB and ROCK1 is present on Ser36. Thr41 carries the phosphothreonine modification. The IF rod domain occupies 67–375 (ERAEMMELND…KLLEGEENRI (309 aa)). Residues 71 to 102 (MMELNDRFASYIEKVRFLEQQNKALAAELNQL) are coil 1A. Phosphoserine is present on Ser80. The segment at 103–113 (RAKEPTKLADV) is linker 1. Phosphothreonine is present on residues Thr108 and Thr148. Residues 114–212 (YQAELRELRL…EEEVRELQEQ (99 aa)) form a coil 1B region. Residues 213–228 (LAQQQVHVEMDVAKPD) are linker 12. The segment at 229 to 250 (LTAALREIRTQYEAVATSNMQE) is coil 2A. The tract at residues 251 to 254 (TEEW) is linker 2. The coil 2B stretch occupies residues 255–375 (YRSKFADLTD…KLLEGEENRI (121 aa)). Ser267 carries the phosphoserine modification. Arg268 is subject to Citrulline. A Phosphoserine modification is found at Ser321. A tail region spans residues 376–430 (TIPVQTFSNLQIRETSLDTKSVSEGHLKRNIVVKTVEMRDGEVIKESKQEHKDVM). Thr381 is subject to Phosphothreonine. Phosphoserine is present on Ser383. Citrulline is present on residues Arg404 and Arg414.

It belongs to the intermediate filament family. As to quaternary structure, interacts with SYNM. Interacts with PSEN1 (via N-terminus). Phosphorylated by PKN1. Expressed in the cortex and hippocampus. Expression decreases following acute and chronic corticosterone treatment.

The protein resides in the cytoplasm. Its function is as follows. GFAP, a class-III intermediate filament, is a cell-specific marker that, during the development of the central nervous system, distinguishes astrocytes from other glial cells. The protein is Glial fibrillary acidic protein (Gfap) of Rattus norvegicus (Rat).